The chain runs to 105 residues: ATP synthase subunit c (105 aa).

2 consecutive transmembrane segments (helical) span residues 37–57 and 82–102; these read IGAG…GYIF and SAIS…LIFV.

The protein belongs to the ATPase C chain family. As to quaternary structure, F-type ATPases have 2 components, F(1) - the catalytic core - and F(0) - the membrane proton channel. F(1) has five subunits: alpha(3), beta(3), gamma(1), delta(1), epsilon(1). F(0) has three main subunits: a(1), b(2) and c(10-14). The alpha and beta chains form an alternating ring which encloses part of the gamma chain. F(1) is attached to F(0) by a central stalk formed by the gamma and epsilon chains, while a peripheral stalk is formed by the delta and b chains.

It is found in the cell membrane. F(1)F(0) ATP synthase produces ATP from ADP in the presence of a proton or sodium gradient. F-type ATPases consist of two structural domains, F(1) containing the extramembraneous catalytic core and F(0) containing the membrane proton channel, linked together by a central stalk and a peripheral stalk. During catalysis, ATP synthesis in the catalytic domain of F(1) is coupled via a rotary mechanism of the central stalk subunits to proton translocation. Functionally, key component of the F(0) channel; it plays a direct role in translocation across the membrane. A homomeric c-ring of between 10-14 subunits forms the central stalk rotor element with the F(1) delta and epsilon subunits. The chain is ATP synthase subunit c from Mycoplasma pneumoniae (strain ATCC 29342 / M129 / Subtype 1) (Mycoplasmoides pneumoniae).